A 1316-amino-acid polypeptide reads, in one-letter code: DNA-directed RNA polymerase subunit beta' (1316 aa).

Zn(2+) contacts are provided by cysteine 60, cysteine 62, cysteine 75, and cysteine 78. Residues aspartate 535, aspartate 537, and aspartate 539 each coordinate Mg(2+). Cysteine 891, cysteine 968, cysteine 975, and cysteine 978 together coordinate Zn(2+).

The protein belongs to the RNA polymerase beta' chain family. The RNAP catalytic core consists of 2 alpha, 1 beta, 1 beta' and 1 omega subunit. When a sigma factor is associated with the core the holoenzyme is formed, which can initiate transcription. Mg(2+) serves as cofactor. Requires Zn(2+) as cofactor.

The catalysed reaction is RNA(n) + a ribonucleoside 5'-triphosphate = RNA(n+1) + diphosphate. Functionally, DNA-dependent RNA polymerase catalyzes the transcription of DNA into RNA using the four ribonucleoside triphosphates as substrates. The chain is DNA-directed RNA polymerase subunit beta' from Mycobacterium tuberculosis (strain ATCC 25177 / H37Ra).